We begin with the raw amino-acid sequence, 571 residues long: Proline--tRNA ligase (571 aa).

The protein belongs to the class-II aminoacyl-tRNA synthetase family. ProS type 1 subfamily. Homodimer.

The protein resides in the cytoplasm. It catalyses the reaction tRNA(Pro) + L-proline + ATP = L-prolyl-tRNA(Pro) + AMP + diphosphate. Its function is as follows. Catalyzes the attachment of proline to tRNA(Pro) in a two-step reaction: proline is first activated by ATP to form Pro-AMP and then transferred to the acceptor end of tRNA(Pro). As ProRS can inadvertently accommodate and process non-cognate amino acids such as alanine and cysteine, to avoid such errors it has two additional distinct editing activities against alanine. One activity is designated as 'pretransfer' editing and involves the tRNA(Pro)-independent hydrolysis of activated Ala-AMP. The other activity is designated 'posttransfer' editing and involves deacylation of mischarged Ala-tRNA(Pro). The misacylated Cys-tRNA(Pro) is not edited by ProRS. This Acinetobacter baumannii (strain ATCC 17978 / DSM 105126 / CIP 53.77 / LMG 1025 / NCDC KC755 / 5377) protein is Proline--tRNA ligase.